The sequence spans 181 residues: Adenine phosphoribosyltransferase (181 aa).

Belongs to the purine/pyrimidine phosphoribosyltransferase family. In terms of assembly, homodimer.

The protein localises to the cytoplasm. It catalyses the reaction AMP + diphosphate = 5-phospho-alpha-D-ribose 1-diphosphate + adenine. It functions in the pathway purine metabolism; AMP biosynthesis via salvage pathway; AMP from adenine: step 1/1. Its function is as follows. Catalyzes a salvage reaction resulting in the formation of AMP, that is energically less costly than de novo synthesis. This Aliivibrio salmonicida (strain LFI1238) (Vibrio salmonicida (strain LFI1238)) protein is Adenine phosphoribosyltransferase.